The primary structure comprises 757 residues: uncharacterized protein (757 aa).

In terms of domain architecture, S1 motif spans 640–709 (GMILEGVVSN…ARKRIALTMR (70 aa)). The span at 710-741 (LDDEPGGAKHKMPSENRSRERTAGRKPQRNDR) shows a compositional bias: basic and acidic residues. The interval 710–757 (LDDEPGGAKHKMPSENRSRERTAGRKPQRNDRAPANSAMADAFAKLKR) is disordered.

This is an uncharacterized protein from Neisseria meningitidis serogroup A / serotype 4A (strain DSM 15465 / Z2491).